Here is a 157-residue protein sequence, read N- to C-terminus: SsrA-binding protein (157 aa).

The segment covering 136 to 151 (KRETEKKRDWSREKGR) has biased composition (basic and acidic residues). Residues 136–157 (KRETEKKRDWSREKGRLLRARG) are disordered.

The protein belongs to the SmpB family.

Its subcellular location is the cytoplasm. Functionally, required for rescue of stalled ribosomes mediated by trans-translation. Binds to transfer-messenger RNA (tmRNA), required for stable association of tmRNA with ribosomes. tmRNA and SmpB together mimic tRNA shape, replacing the anticodon stem-loop with SmpB. tmRNA is encoded by the ssrA gene; the 2 termini fold to resemble tRNA(Ala) and it encodes a 'tag peptide', a short internal open reading frame. During trans-translation Ala-aminoacylated tmRNA acts like a tRNA, entering the A-site of stalled ribosomes, displacing the stalled mRNA. The ribosome then switches to translate the ORF on the tmRNA; the nascent peptide is terminated with the 'tag peptide' encoded by the tmRNA and targeted for degradation. The ribosome is freed to recommence translation, which seems to be the essential function of trans-translation. The chain is SsrA-binding protein from Rhodopseudomonas palustris (strain HaA2).